Consider the following 102-residue polypeptide: Large ribosomal subunit protein bL21 (102 aa).

This sequence belongs to the bacterial ribosomal protein bL21 family. In terms of assembly, part of the 50S ribosomal subunit. Contacts protein L20.

In terms of biological role, this protein binds to 23S rRNA in the presence of protein L20. In Lachnospira eligens (strain ATCC 27750 / DSM 3376 / VPI C15-48 / C15-B4) (Eubacterium eligens), this protein is Large ribosomal subunit protein bL21.